A 425-amino-acid polypeptide reads, in one-letter code: Oxytetracycline polyketide putative beta-ketoacyl synthase 1 (425 aa).

One can recognise a Ketosynthase family 3 (KS3) domain in the interval 7–420 (ARRVVITGIG…GFQSAIVLTE (414 aa)). Catalysis depends on for beta-ketoacyl synthase activity residues Cys173, His313, and His350.

Belongs to the thiolase-like superfamily. Beta-ketoacyl-ACP synthases family.

The protein operates within antibiotic biosynthesis; oxytetracycline biosynthesis. The sequence is that of Oxytetracycline polyketide putative beta-ketoacyl synthase 1 from Streptomyces rimosus.